The primary structure comprises 97 residues: Protein 9b (97 aa).

Positions 8 to 97 constitute a 9b domain; sequence VPPALHLVDP…PDEFVVVTAK (90 aa).

The protein belongs to the coronavirus group 2 protein 9b family. As to quaternary structure, homodimer.

The protein resides in the host cytoplasmic vesicle membrane. Its subcellular location is the host cytoplasm. This is Protein 9b from Rhinolophus sinicus (Chinese rufous horseshoe bat).